Here is a 313-residue protein sequence, read N- to C-terminus: Porphobilinogen deaminase (313 aa).

Residue Cys241 is modified to S-(dipyrrolylmethanemethyl)cysteine.

Belongs to the HMBS family. In terms of assembly, monomer. Requires dipyrromethane as cofactor.

It carries out the reaction 4 porphobilinogen + H2O = hydroxymethylbilane + 4 NH4(+). It functions in the pathway porphyrin-containing compound metabolism; protoporphyrin-IX biosynthesis; coproporphyrinogen-III from 5-aminolevulinate: step 2/4. Functionally, tetrapolymerization of the monopyrrole PBG into the hydroxymethylbilane pre-uroporphyrinogen in several discrete steps. This Idiomarina loihiensis (strain ATCC BAA-735 / DSM 15497 / L2-TR) protein is Porphobilinogen deaminase.